The sequence spans 207 residues: Probable GTP-binding protein EngB (207 aa).

The EngB-type G domain maps to 24–199; sequence GGYEVAFAGR…RGIVGGWLGL (176 aa). GTP is bound by residues 32–39, 59–63, 77–80, 144–147, and 178–180; these read GRSNAGKS, GRTQQ, DLPG, TKAD, and YSG. Positions 39 and 61 each coordinate Mg(2+).

The protein belongs to the TRAFAC class TrmE-Era-EngA-EngB-Septin-like GTPase superfamily. EngB GTPase family. Mg(2+) serves as cofactor.

Necessary for normal cell division and for the maintenance of normal septation. The polypeptide is Probable GTP-binding protein EngB (Xanthomonas campestris pv. campestris (strain 8004)).